We begin with the raw amino-acid sequence, 104 residues long: Large ribosomal subunit protein uL24 (104 aa).

It belongs to the universal ribosomal protein uL24 family. As to quaternary structure, part of the 50S ribosomal subunit.

In terms of biological role, one of two assembly initiator proteins, it binds directly to the 5'-end of the 23S rRNA, where it nucleates assembly of the 50S subunit. Functionally, one of the proteins that surrounds the polypeptide exit tunnel on the outside of the subunit. The chain is Large ribosomal subunit protein uL24 from Buchnera aphidicola subsp. Baizongia pistaciae (strain Bp).